We begin with the raw amino-acid sequence, 479 residues long: Glutamyl-tRNA(Gln) amidotransferase subunit A (479 aa).

Catalysis depends on charge relay system residues Lys71 and Ser146. The active-site Acyl-ester intermediate is Ser170.

It belongs to the amidase family. GatA subfamily. In terms of assembly, heterotrimer of A, B and C subunits.

It carries out the reaction L-glutamyl-tRNA(Gln) + L-glutamine + ATP + H2O = L-glutaminyl-tRNA(Gln) + L-glutamate + ADP + phosphate + H(+). Functionally, allows the formation of correctly charged Gln-tRNA(Gln) through the transamidation of misacylated Glu-tRNA(Gln) in organisms which lack glutaminyl-tRNA synthetase. The reaction takes place in the presence of glutamine and ATP through an activated gamma-phospho-Glu-tRNA(Gln). The polypeptide is Glutamyl-tRNA(Gln) amidotransferase subunit A (Lactobacillus acidophilus (strain ATCC 700396 / NCK56 / N2 / NCFM)).